A 188-amino-acid polypeptide reads, in one-letter code: Threonylcarbamoyl-AMP synthase (188 aa).

Positions 3 to 188 constitute a YrdC-like domain; the sequence is QLHPSEIKDI…RSGKILRNGQ (186 aa).

It belongs to the SUA5 family. TsaC subfamily.

Its subcellular location is the cytoplasm. It catalyses the reaction L-threonine + hydrogencarbonate + ATP = L-threonylcarbamoyladenylate + diphosphate + H2O. Its function is as follows. Required for the formation of a threonylcarbamoyl group on adenosine at position 37 (t(6)A37) in tRNAs that read codons beginning with adenine. Catalyzes the conversion of L-threonine, HCO(3)(-)/CO(2) and ATP to give threonylcarbamoyl-AMP (TC-AMP) as the acyladenylate intermediate, with the release of diphosphate. The protein is Threonylcarbamoyl-AMP synthase of Shewanella sp. (strain MR-4).